The chain runs to 217 residues: Large ribosomal subunit protein uL3 (217 aa).

Residues 134–154 (DATHGNSLSHRAPGSIGQCQT) form a disordered region. Position 153 is an N5-methylglutamine (Q153).

This sequence belongs to the universal ribosomal protein uL3 family. In terms of assembly, part of the 50S ribosomal subunit. Forms a cluster with proteins L14 and L19. Methylated by PrmB.

Functionally, one of the primary rRNA binding proteins, it binds directly near the 3'-end of the 23S rRNA, where it nucleates assembly of the 50S subunit. This is Large ribosomal subunit protein uL3 from Coxiella burnetii (strain Dugway 5J108-111).